The chain runs to 143 residues: Nucleoside diphosphate kinase (143 aa).

K11, F59, R87, T93, R104, and N114 together coordinate ATP. H117 (pros-phosphohistidine intermediate) is an active-site residue.

The protein belongs to the NDK family. Homotetramer. Mg(2+) serves as cofactor.

The protein localises to the cytoplasm. It carries out the reaction a 2'-deoxyribonucleoside 5'-diphosphate + ATP = a 2'-deoxyribonucleoside 5'-triphosphate + ADP. It catalyses the reaction a ribonucleoside 5'-diphosphate + ATP = a ribonucleoside 5'-triphosphate + ADP. Functionally, major role in the synthesis of nucleoside triphosphates other than ATP. The ATP gamma phosphate is transferred to the NDP beta phosphate via a ping-pong mechanism, using a phosphorylated active-site intermediate. In Clostridium perfringens (strain SM101 / Type A), this protein is Nucleoside diphosphate kinase.